The chain runs to 310 residues: MALSRRLRLRLCARLPDFFLLLLFRGCVIEAVNLKSSNRNPVVHEFESVELSCIITDSQTNDPRIEWKKIQDGQTTYVYFDNKIQGDLAGRTDVFGKTSLRIWNVTRSDSAIYRCEVVALNDRKEVDELTIELIVQVKPVAPVCRVPKAVPVGKAATLQCQESEGYPRPYYSWYRNDVPLPTDSRANPRFQNSSFHVNSETGTLVFSAVHKEDSGQYYCIASNDAGAARCEGQDMEVYDLNIAGIIGGVLVVLIVLAVITMGICCAYRRGCFISSKQDGESYKSPGKHEGVNYIRTSEEGDFRHKSSFVI.

The N-terminal stretch at 1–31 is a signal peptide; sequence MALSRRLRLRLCARLPDFFLLLLFRGCVIEA. The Extracellular segment spans residues 32 to 241; the sequence is VNLKSSNRNP…GQDMEVYDLN (210 aa). The 93-residue stretch at 35 to 127 folds into the Ig-like V-type domain; the sequence is KSSNRNPVVH…VALNDRKEVD (93 aa). 2 disulfide bridges follow: Cys-53/Cys-115 and Cys-160/Cys-219. Residues Asn-104 and Asn-192 are each glycosylated (N-linked (GlcNAc...) asparagine). An Ig-like C2-type domain is found at 139 to 236; sequence PVAPVCRVPK…AARCEGQDME (98 aa). Residues 242 to 262 traverse the membrane as a helical segment; that stretch reads IAGIIGGVLVVLIVLAVITMG. The Cytoplasmic segment spans residues 263-310; that stretch reads ICCAYRRGCFISSKQDGESYKSPGKHEGVNYIRTSEEGDFRHKSSFVI. 2 S-palmitoyl cysteine lipidation sites follow: Cys-264 and Cys-265.

Belongs to the immunoglobulin superfamily. As to quaternary structure, interacts with ITGAM. Interacts with GORASP2. Post-translationally, proteolytically cleaved from endothelial cells surface into a soluble form by ADAM10 and ADAM17; the release of soluble JAM3 is increased by pro-inflammatory factors. In terms of processing, S-palmitoylated by ZDHHC7. S-palmitoylation promotes expression at tight junctions.

Its subcellular location is the cell membrane. It is found in the cell junction. The protein localises to the desmosome. It localises to the tight junction. The protein resides in the secreted. Junctional adhesion protein that mediates heterotypic cell-cell interactions with its cognate receptor JAM2 to regulate different cellular processes. Plays a role in homing and mobilization of hematopoietic stem and progenitor cells within the bone marrow. At the surface of bone marrow stromal cells, it contributes to the retention of the hematopoietic stem and progenitor cells expressing JAM3. Plays a central role in leukocytes extravasation by facilitating transmigration through the endothelium. Plays a role in spermatogenesis where JAM2 and JAM3, which are respectively expressed by Sertoli and germ cells, mediate an interaction between both cell types and play an essential role in the anchorage of germ cells onto Sertoli cells and the assembly of cell polarity complexes during spermatid differentiation. Also functions as a counter-receptor for ITGAM, mediating leukocyte-platelet interactions and is involved in the regulation of transepithelial migration of polymorphonuclear neutrophils (PMN). Plays a role in angiogenesis. Plays a role in the regulation of cell migration. During myogenesis, it is involved in myocyte fusion. In terms of biological role, promotes chemotaxis of vascular endothelial cells and stimulates angiogenesis. The chain is Junctional adhesion molecule C (Jam3) from Rattus norvegicus (Rat).